We begin with the raw amino-acid sequence, 188 residues long: ATP synthase subunit b 1 (188 aa).

The chain crosses the membrane as a helical span at residues 35 to 55 (VHFGSHLFWLAISFGLFYLFI).

The protein belongs to the ATPase B chain family. F-type ATPases have 2 components, F(1) - the catalytic core - and F(0) - the membrane proton channel. F(1) has five subunits: alpha(3), beta(3), gamma(1), delta(1), epsilon(1). F(0) has three main subunits: a(1), b(2) and c(10-14). The alpha and beta chains form an alternating ring which encloses part of the gamma chain. F(1) is attached to F(0) by a central stalk formed by the gamma and epsilon chains, while a peripheral stalk is formed by the delta and b chains.

The protein resides in the cell inner membrane. In terms of biological role, f(1)F(0) ATP synthase produces ATP from ADP in the presence of a proton or sodium gradient. F-type ATPases consist of two structural domains, F(1) containing the extramembraneous catalytic core and F(0) containing the membrane proton channel, linked together by a central stalk and a peripheral stalk. During catalysis, ATP synthesis in the catalytic domain of F(1) is coupled via a rotary mechanism of the central stalk subunits to proton translocation. Component of the F(0) channel, it forms part of the peripheral stalk, linking F(1) to F(0). This chain is ATP synthase subunit b 1, found in Bartonella henselae (strain ATCC 49882 / DSM 28221 / CCUG 30454 / Houston 1) (Rochalimaea henselae).